We begin with the raw amino-acid sequence, 450 residues long: NADP-specific glutamate dehydrogenase (450 aa).

K114 is a catalytic residue.

The protein belongs to the Glu/Leu/Phe/Val dehydrogenases family. Homohexamer.

The enzyme catalyses L-glutamate + NADP(+) + H2O = 2-oxoglutarate + NH4(+) + NADPH + H(+). The sequence is that of NADP-specific glutamate dehydrogenase (gdhA) from Botryotinia fuckeliana (Noble rot fungus).